A 536-amino-acid chain; its full sequence is Arylsulfatase K (536 aa).

Positions 1–24 are cleaved as a signal peptide; it reads MIQKCIALSLFLFSALPEDNIVRA. Positions 42 and 82 each coordinate Ca(2+). The active-site Nucleophile is the cysteine 82. Cysteine 82 is subject to 3-oxoalanine (Cys). Position 130 (lysine 130) interacts with substrate. N-linked (GlcNAc...) asparagine glycosylation is present at asparagine 195. Histidine 253 provides a ligand contact to substrate. N-linked (GlcNAc...) asparagine glycosylation occurs at asparagine 264. Ca(2+) is bound by residues aspartate 315 and histidine 316. Asparagine 377, asparagine 416, and asparagine 501 each carry an N-linked (GlcNAc...) asparagine glycan.

It belongs to the sulfatase family. It depends on Ca(2+) as a cofactor. The conversion to 3-oxoalanine (also known as C-formylglycine, FGly), of a serine or cysteine residue in prokaryotes and of a cysteine residue in eukaryotes, is critical for catalytic activity.

The protein resides in the secreted. Its subcellular location is the lysosome. It carries out the reaction an aryl sulfate + H2O = a phenol + sulfate + H(+). The enzyme catalyses Hydrolysis of the 2-sulfate groups of the 2-O-sulfo-D-glucuronate residues of chondroitin sulfate, heparin and heparitin sulfate.. Catalyzes the hydrolysis of pseudosubstrates such as p-nitrocatechol sulfate and p-nitrophenyl sulfate. Catalyzes the hydrolysis of the 2-sulfate groups of the 2-O-sulfo-D-glucuronate residues of chondroitin sulfate, heparin and heparitin sulfate. Acts selectively on 2-sulfoglucuronate and lacks activity against 2-sulfoiduronate. This chain is Arylsulfatase K (arsk), found in Xenopus laevis (African clawed frog).